A 459-amino-acid chain; its full sequence is Glutamyl-tRNA(Gln) amidotransferase subunit A, mitochondrial (459 aa).

Catalysis depends on charge relay system residues Lys-37 and Ser-114. Residue Ser-138 is the Acyl-ester intermediate of the active site.

Belongs to the amidase family. GatA subfamily. In terms of assembly, subunit of the heterotrimeric GatFAB amidotransferase (AdT) complex, composed of A, B and F subunits.

It localises to the mitochondrion. It catalyses the reaction L-glutamyl-tRNA(Gln) + L-glutamine + ATP + H2O = L-glutaminyl-tRNA(Gln) + L-glutamate + ADP + phosphate + H(+). Functionally, allows the formation of correctly charged Gln-tRNA(Gln) through the transamidation of misacylated Glu-tRNA(Gln) in the mitochondria. The reaction takes place in the presence of glutamine and ATP through an activated gamma-phospho-Glu-tRNA(Gln). This Yarrowia lipolytica (strain CLIB 122 / E 150) (Yeast) protein is Glutamyl-tRNA(Gln) amidotransferase subunit A, mitochondrial.